The primary structure comprises 236 residues: Orotidine 5'-phosphate decarboxylase (236 aa).

Substrate contacts are provided by residues Asp-12, Lys-34, 60–69, Thr-123, Arg-184, Gln-193, Gly-213, and Arg-214; that span reads DLKLHDIPHT. Catalysis depends on Lys-62, which acts as the Proton donor.

This sequence belongs to the OMP decarboxylase family. Type 1 subfamily. Homodimer.

The catalysed reaction is orotidine 5'-phosphate + H(+) = UMP + CO2. Its pathway is pyrimidine metabolism; UMP biosynthesis via de novo pathway; UMP from orotate: step 2/2. Its function is as follows. Catalyzes the decarboxylation of orotidine 5'-monophosphate (OMP) to uridine 5'-monophosphate (UMP). This Gluconobacter oxydans (strain 621H) (Gluconobacter suboxydans) protein is Orotidine 5'-phosphate decarboxylase.